The sequence spans 503 residues: Glycerol kinase (503 aa).

Thr14 is a binding site for ADP. Thr14, Thr15, and Ser16 together coordinate ATP. Thr14 is a binding site for sn-glycerol 3-phosphate. Arg18 contributes to the ADP binding site. Arg84, Glu85, Tyr136, and Asp246 together coordinate sn-glycerol 3-phosphate. Residues Arg84, Glu85, Tyr136, Asp246, and Gln247 each contribute to the glycerol site. Positions 268 and 311 each coordinate ADP. ATP contacts are provided by Thr268, Gly311, Gln315, and Gly412. ADP is bound by residues Gly412 and Asn416.

This sequence belongs to the FGGY kinase family.

It catalyses the reaction glycerol + ATP = sn-glycerol 3-phosphate + ADP + H(+). Its pathway is polyol metabolism; glycerol degradation via glycerol kinase pathway; sn-glycerol 3-phosphate from glycerol: step 1/1. Inhibited by fructose 1,6-bisphosphate (FBP). Its function is as follows. Key enzyme in the regulation of glycerol uptake and metabolism. Catalyzes the phosphorylation of glycerol to yield sn-glycerol 3-phosphate. This Haemophilus influenzae (strain PittEE) protein is Glycerol kinase.